Here is a 1163-residue protein sequence, read N- to C-terminus: Carbamoyl phosphate synthase large chain (1163 aa).

Positions M1 to E456 are carboxyphosphate synthetic domain. Residue R129 participates in ATP binding. Positions L148–K170 are disordered. Positions D153–K170 are enriched in basic and acidic residues. In terms of domain architecture, ATP-grasp 1 spans L185–V381. ATP is bound by residues R222, G228, G229, E261, V263, E268, G294, V295, H296, Q338, and E352. Mg(2+) is bound by residues Q338, E352, and N354. Positions 338, 352, and 354 each coordinate Mn(2+). Residues T457–A614 form an oligomerization domain region. The carbamoyl phosphate synthetic domain stretch occupies residues Q615–G1026. The 213-residue stretch at Q743 to A955 folds into the ATP-grasp 2 domain. ATP-binding residues include R779, S839, L841, E846, G871, I872, H873, S874, Q914, and E926. Positions 914, 926, and 928 each coordinate Mg(2+). Residues Q914, E926, and N928 each contribute to the Mn(2+) site. The region spanning V1027–T1163 is the MGS-like domain. The tract at residues V1027–T1163 is allosteric domain.

It belongs to the CarB family. As to quaternary structure, composed of two chains; the small (or glutamine) chain promotes the hydrolysis of glutamine to ammonia, which is used by the large (or ammonia) chain to synthesize carbamoyl phosphate. Tetramer of heterodimers (alpha,beta)4. The cofactor is Mg(2+). Mn(2+) is required as a cofactor.

It catalyses the reaction hydrogencarbonate + L-glutamine + 2 ATP + H2O = carbamoyl phosphate + L-glutamate + 2 ADP + phosphate + 2 H(+). It carries out the reaction hydrogencarbonate + NH4(+) + 2 ATP = carbamoyl phosphate + 2 ADP + phosphate + 2 H(+). It participates in amino-acid biosynthesis; L-arginine biosynthesis; carbamoyl phosphate from bicarbonate: step 1/1. The protein operates within pyrimidine metabolism; UMP biosynthesis via de novo pathway; (S)-dihydroorotate from bicarbonate: step 1/3. Functionally, large subunit of the glutamine-dependent carbamoyl phosphate synthetase (CPSase). CPSase catalyzes the formation of carbamoyl phosphate from the ammonia moiety of glutamine, carbonate, and phosphate donated by ATP, constituting the first step of 2 biosynthetic pathways, one leading to arginine and/or urea and the other to pyrimidine nucleotides. The large subunit (synthetase) binds the substrates ammonia (free or transferred from glutamine from the small subunit), hydrogencarbonate and ATP and carries out an ATP-coupled ligase reaction, activating hydrogencarbonate by forming carboxy phosphate which reacts with ammonia to form carbamoyl phosphate. This chain is Carbamoyl phosphate synthase large chain, found in Rhizobium meliloti (strain 1021) (Ensifer meliloti).